The following is a 629-amino-acid chain: Solute carrier family 22 member 14 (629 aa).

Positions 1–21 (MKEDQNYKTAFGSQNSRDTHR) are disordered. Residues 1–67 (MKEDQNYKTA…IGEFGTFQWR (67 aa)) lie on the Cytoplasmic side of the membrane. A compositionally biased stretch (polar residues) spans 7 to 16 (YKTAFGSQNS). The chain crosses the membrane as a helical span at residues 68–88 (LVVLTFIPSILSTFFIFSHHF). The Extracellular portion of the chain corresponds to 89 to 183 (LLTAQRPYCN…LVCGNEPNKE (95 aa)). Asn-98, Asn-116, Asn-124, and Asn-149 each carry an N-linked (GlcNAc...) asparagine glycan. A helical transmembrane segment spans residues 184–204 (NGLTVFLSGVLTGSLLFGFLS). The Cytoplasmic segment spans residues 205-209 (DKLGR). Residues 210–230 (YPIILLSLLGFLIFGFGTAFV) traverse the membrane as a helical segment. The Extracellular segment spans residues 231–240 (SSFYQYLFFR). A helical transmembrane segment spans residues 241-261 (FFVAQASVGYAICSVSLVMEW). At 262 to 269 (LVGEHRAQ) the chain is on the cytoplasmic side. Residues 270 to 290 (AVILQHSFLTIGVILLTGLAY) form a helical membrane-spanning segment. Residues 291–295 (KVVHW) lie on the Extracellular side of the membrane. Residues 296–316 (RLLCLLGGMPMFPLICNIWVL) traverse the membrane as a helical segment. At 317-378 (RESPRWLMVR…DFCTNQHLFK (62 aa)) the chain is on the cytoplasmic side. The chain crosses the membrane as a helical span at residues 379–399 (VVLAIGCVWFTVSYISFTLNL). Residues 400–409 (KMNDFGLDVY) are Extracellular-facing. Residues 410-430 (FVQMVRSIVAVPARLCCIILL) traverse the membrane as a helical segment. The Cytoplasmic portion of the chain corresponds to 431 to 436 (EYFGRK). A helical membrane pass occupies residues 437–457 (WALNLTLFLVTSMCLFLLFLP). The Extracellular portion of the chain corresponds to 458 to 463 (QEPKST). A helical transmembrane segment spans residues 464–484 (IILTLMLAEFSMAGTLSIFFI). Over 485–496 (YTAELLPTVLRS) the chain is Cytoplasmic. A helical transmembrane segment spans residues 497 to 517 (TGLGMVSLAWVAGAISSVAIF). Residues 518–523 (KQTKTQ) lie on the Extracellular side of the membrane. Residues 524-544 (LPIFFCCLCCVLALCFSSLVP) traverse the membrane as a helical segment. Over 545-629 (ETGSQSLRDS…PVQSLKAQPP (85 aa)) the chain is Cytoplasmic.

The protein belongs to the major facilitator (TC 2.A.1) superfamily. Organic cation transporter (TC 2.A.1.19) family. As to expression, testis-specific (at protein level). Specifically expressed in male germ cells (at protein level).

Its subcellular location is the mitochondrion inner membrane. The protein resides in the cell projection. The protein localises to the cilium. It localises to the flagellum membrane. The enzyme catalyses riboflavin(in) = riboflavin(out). Its function is as follows. Riboflavin transporter localized at the inner mitochondrial membrane of the spermatozoa midpiece, which is required for male fertility. SLC22A14-mediated riboflavin transport is essential for spermatozoa energy generation and motility: riboflavin is the precursor of FMN and FAD, which are coenzymes of many enzymes in the TCA cycle (the citric acid cycle) in mitochondria. Required for sperm motility and normal sperm flagellar structure. This chain is Solute carrier family 22 member 14, found in Mus musculus (Mouse).